The primary structure comprises 134 residues: Small ribosomal subunit protein uS8c (134 aa).

This sequence belongs to the universal ribosomal protein uS8 family. In terms of assembly, part of the 30S ribosomal subunit.

It is found in the plastid. It localises to the chloroplast. Functionally, one of the primary rRNA binding proteins, it binds directly to 16S rRNA central domain where it helps coordinate assembly of the platform of the 30S subunit. This is Small ribosomal subunit protein uS8c (rps8) from Daucus carota (Wild carrot).